A 384-amino-acid chain; its full sequence is Na(+)/H(+) antiporter NhaA (384 aa).

11 helical membrane-spanning segments follow: residues 17–37, 53–73, 89–109, 118–138, 147–167, 171–191, 198–218, 251–271, 283–303, 321–341, and 354–374; these read SGLFLISCTLFSLVIANSAIA, LEYWINDGLMTIFFLLIGLEL, MLPIFGAIGGMIVPAGLFLVM, GAGIPMATDIAFALAILSLLG, IFLTALAVIDDLGAILIIAVF, TLLWTNLCIALGIFGFLLILN, LIPYLIGGVFMWYFMLHSGVH, PVAFFILPLFALANTAIVLSS, IGIALGLIIGKPLGIFLLSML, ILAVGFLGGIGFTMSIFITLL, and FVILISSLIAGIIGYFSLKYV.

Belongs to the NhaA Na(+)/H(+) (TC 2.A.33) antiporter family.

It is found in the cell inner membrane. The catalysed reaction is Na(+)(in) + 2 H(+)(out) = Na(+)(out) + 2 H(+)(in). Na(+)/H(+) antiporter that extrudes sodium in exchange for external protons. In Flavobacterium psychrophilum (strain ATCC 49511 / DSM 21280 / CIP 103535 / JIP02/86), this protein is Na(+)/H(+) antiporter NhaA.